The following is a 209-amino-acid chain: MKTSEWIDISQPLNNDIATWPGDTPFSYEVSWSKEESGSVNVGKLTMSIHTGTHIDAPFHFDNNGKKVLDLDIQVYVGPTRIIDVSNLESIGKKELEKFHLEGVERLLLRTSSHGKANEFPDIIPHLRADIAPFLSEKGIRLIGVDVPSVDPLDDKELAAHHQLFKHGIHILENVVLDHVADGDYELIALPLALSDADGSPVRAVIKPI.

W20 contributes to the substrate binding site. H50, H54, and D56 together coordinate Zn(2+). The active-site Proton donor/acceptor is H60. Zn(2+)-binding residues include H161 and E173.

This sequence belongs to the Cyclase 1 superfamily. KynB family. Homodimer. Zn(2+) is required as a cofactor.

It carries out the reaction N-formyl-L-kynurenine + H2O = L-kynurenine + formate + H(+). It participates in amino-acid degradation; L-tryptophan degradation via kynurenine pathway; L-kynurenine from L-tryptophan: step 2/2. Its function is as follows. Catalyzes the hydrolysis of N-formyl-L-kynurenine to L-kynurenine, the second step in the kynurenine pathway of tryptophan degradation. This chain is Kynurenine formamidase, found in Bacillus thuringiensis subsp. konkukian (strain 97-27).